The sequence spans 211 residues: Nitrogen fixation regulation protein FixK (211 aa).

The 71-residue stretch at 134-204 folds into the HTH crp-type domain; that stretch reads QCAVERIAAF…ARTIDIMKPE (71 aa). Positions 163–182 form a DNA-binding region, H-T-H motif; that stretch reads RQDIADYLGLTIETVSRVVT.

FixK is a protein that regulates nitrogen fixation genes both positively and negatively. FixK appears to repress its own expression and that of nifA. FixK may bind DNA at the FNR consensus binding site. This chain is Nitrogen fixation regulation protein FixK (fixK), found in Rhizobium meliloti (strain 1021) (Ensifer meliloti).